A 423-amino-acid polypeptide reads, in one-letter code: 3-isopropylmalate dehydratase large subunit 1 (423 aa).

Positions 302, 362, and 365 each coordinate [4Fe-4S] cluster.

This sequence belongs to the aconitase/IPM isomerase family. LeuC type 2 subfamily. Heterodimer of LeuC and LeuD. Requires [4Fe-4S] cluster as cofactor.

It carries out the reaction (2R,3S)-3-isopropylmalate = (2S)-2-isopropylmalate. It functions in the pathway amino-acid biosynthesis; L-leucine biosynthesis; L-leucine from 3-methyl-2-oxobutanoate: step 2/4. In terms of biological role, catalyzes the isomerization between 2-isopropylmalate and 3-isopropylmalate, via the formation of 2-isopropylmaleate. The sequence is that of 3-isopropylmalate dehydratase large subunit 1 from Pyrococcus abyssi (strain GE5 / Orsay).